The chain runs to 61 residues: Alpha-conotoxin-like Tx1.2 (61 aa).

The N-terminal stretch at 1-20 (MFTVFLLVVLATTVVSFTSG) is a signal peptide. A propeptide spanning residues 21–42 (RSTFRGRNAAAKASGLVSLTDR) is cleaved from the precursor. 2 positions are modified to 4-hydroxyproline: Pro-44 and Pro-50. 2 disulfide bridges follow: Cys-46/Cys-52 and Cys-47/Cys-60. The segment at 48–50 (SHP) is ser-Xaa-Pro motif, crucial for potent interaction with nAChR.

The protein belongs to the conotoxin A superfamily. In terms of tissue distribution, expressed by the venom duct.

The protein localises to the secreted. In terms of biological role, alpha-conotoxins act on postsynaptic membranes, they bind to the nicotinic acetylcholine receptors (nAChR) and thus inhibit them. This toxin also inhibits high voltage-activated (HVA) calcium channel currents in rat DRG neurons (8% inhibition at 1 uM toxin) probably by activating GABA(B) receptors (GABBR1 and/or GABBR2). This chain is Alpha-conotoxin-like Tx1.2, found in Conus textile (Cloth-of-gold cone).